Here is a 724-residue protein sequence, read N- to C-terminus: Catalase-peroxidase (724 aa).

The segment at residues 96–225 is a cross-link (tryptophyl-tyrosyl-methioninium (Trp-Tyr) (with M-251)); that stretch reads WHAAGTYRVA…LAAVMMGLIY (130 aa). The active-site Proton acceptor is His97. The tryptophyl-tyrosyl-methioninium (Tyr-Met) (with W-96) cross-link spans 225–251; the sequence is YVNPEGVDGNPDPLRTAEDVRITFERM. His266 is a binding site for heme b.

The protein belongs to the peroxidase family. Peroxidase/catalase subfamily. In terms of assembly, homodimer or homotetramer. The cofactor is heme b. In terms of processing, formation of the three residue Trp-Tyr-Met cross-link is important for the catalase, but not the peroxidase activity of the enzyme.

It catalyses the reaction H2O2 + AH2 = A + 2 H2O. It carries out the reaction 2 H2O2 = O2 + 2 H2O. In terms of biological role, bifunctional enzyme with both catalase and broad-spectrum peroxidase activity. This Halorhodospira halophila (strain DSM 244 / SL1) (Ectothiorhodospira halophila (strain DSM 244 / SL1)) protein is Catalase-peroxidase.